A 263-amino-acid polypeptide reads, in one-letter code: tRNA (guanine-N(1)-)-methyltransferase (263 aa).

S-adenosyl-L-methionine is bound by residues G124 and 144 to 149 (LGDFVL).

Belongs to the RNA methyltransferase TrmD family. In terms of assembly, homodimer.

The protein localises to the cytoplasm. The enzyme catalyses guanosine(37) in tRNA + S-adenosyl-L-methionine = N(1)-methylguanosine(37) in tRNA + S-adenosyl-L-homocysteine + H(+). Specifically methylates guanosine-37 in various tRNAs. In Aromatoleum aromaticum (strain DSM 19018 / LMG 30748 / EbN1) (Azoarcus sp. (strain EbN1)), this protein is tRNA (guanine-N(1)-)-methyltransferase.